The chain runs to 113 residues: Putative pterin-4-alpha-carbinolamine dehydratase (113 aa).

The protein belongs to the pterin-4-alpha-carbinolamine dehydratase family.

The enzyme catalyses (4aS,6R)-4a-hydroxy-L-erythro-5,6,7,8-tetrahydrobiopterin = (6R)-L-erythro-6,7-dihydrobiopterin + H2O. This Idiomarina loihiensis (strain ATCC BAA-735 / DSM 15497 / L2-TR) protein is Putative pterin-4-alpha-carbinolamine dehydratase.